The sequence spans 463 residues: ATP synthase subunit beta (463 aa).

Position 152 to 159 (152 to 159 (GGAGVGKT)) interacts with ATP.

This sequence belongs to the ATPase alpha/beta chains family. As to quaternary structure, F-type ATPases have 2 components, CF(1) - the catalytic core - and CF(0) - the membrane proton channel. CF(1) has five subunits: alpha(3), beta(3), gamma(1), delta(1), epsilon(1). CF(0) has three main subunits: a(1), b(2) and c(9-12). The alpha and beta chains form an alternating ring which encloses part of the gamma chain. CF(1) is attached to CF(0) by a central stalk formed by the gamma and epsilon chains, while a peripheral stalk is formed by the delta and b chains.

The protein localises to the cell membrane. The enzyme catalyses ATP + H2O + 4 H(+)(in) = ADP + phosphate + 5 H(+)(out). Produces ATP from ADP in the presence of a proton gradient across the membrane. The catalytic sites are hosted primarily by the beta subunits. This Clostridium botulinum (strain Alaska E43 / Type E3) protein is ATP synthase subunit beta.